Consider the following 365-residue polypeptide: Pheromone M-factor receptor (365 aa).

7 consecutive transmembrane segments (helical) span residues 7–24 (FYQF…PILY), 31–54 (NIPC…ESAI), 73–100 (ITSR…DTVI), 116–133 (VCLS…MVPL), 155–182 (YTLL…VVLY), 204–226 (FLRL…IFMV), and 265–283 (VPPT…SGGW).

The protein belongs to the G-protein coupled receptor 4 family.

It localises to the membrane. Its function is as follows. Receptor for the peptide pheromone M-factor, a mating factor of S.pombe. Pheromone signaling is essential for initiation of meiosis in S.pombe; M-factor signaling alone may be sufficient. This Schizosaccharomyces pombe (strain 972 / ATCC 24843) (Fission yeast) protein is Pheromone M-factor receptor (map3).